A 359-amino-acid chain; its full sequence is Pyruvate dehydrogenase E1 component subunit beta, mitochondrial (359 aa).

The transit peptide at 1 to 19 (MLGVIRNKTIRPSFSAFRF) directs the protein to the mitochondrion. E82 provides a ligand contact to thiamine diphosphate. I135, A183, I184, and D186 together coordinate K(+).

As to quaternary structure, tetramer of 2 alpha and 2 beta subunits. It depends on thiamine diphosphate as a cofactor.

It localises to the mitochondrion matrix. The enzyme catalyses N(6)-[(R)-lipoyl]-L-lysyl-[protein] + pyruvate + H(+) = N(6)-[(R)-S(8)-acetyldihydrolipoyl]-L-lysyl-[protein] + CO2. Functionally, the pyruvate dehydrogenase complex catalyzes the overall conversion of pyruvate to acetyl-CoA and CO(2). It contains multiple copies of three enzymatic components: pyruvate dehydrogenase (E1), dihydrolipoamide acetyltransferase (E2) and lipoamide dehydrogenase (E3). The polypeptide is Pyruvate dehydrogenase E1 component subunit beta, mitochondrial (Pisum sativum (Garden pea)).